A 392-amino-acid polypeptide reads, in one-letter code: S-adenosylmethionine synthase (392 aa).

Residue His-20 participates in ATP binding. A Mg(2+)-binding site is contributed by Asp-22. K(+) is bound at residue Glu-48. L-methionine is bound by residues Glu-61 and Gln-106. Positions 106 to 116 (QSRDIINAIEK) are flexible loop. ATP contacts are provided by residues 171–173 (DSK), Asp-248, 254–255 (RK), Ala-271, and Lys-275. Asp-248 serves as a coordination point for L-methionine. Lys-279 contributes to the L-methionine binding site.

The protein belongs to the AdoMet synthase family. In terms of assembly, homotetramer; dimer of dimers. The cofactor is Mg(2+). K(+) is required as a cofactor.

It localises to the cytoplasm. The catalysed reaction is L-methionine + ATP + H2O = S-adenosyl-L-methionine + phosphate + diphosphate. Its pathway is amino-acid biosynthesis; S-adenosyl-L-methionine biosynthesis; S-adenosyl-L-methionine from L-methionine: step 1/1. Its function is as follows. Catalyzes the formation of S-adenosylmethionine (AdoMet) from methionine and ATP. The overall synthetic reaction is composed of two sequential steps, AdoMet formation and the subsequent tripolyphosphate hydrolysis which occurs prior to release of AdoMet from the enzyme. This chain is S-adenosylmethionine synthase, found in Borreliella burgdorferi (strain ATCC 35210 / DSM 4680 / CIP 102532 / B31) (Borrelia burgdorferi).